Consider the following 518-residue polypeptide: Cytochrome P450 736A117 (518 aa).

Asn12 is a glycosylation site (N-linked (GlcNAc...) asparagine). The helical transmembrane segment at 17 to 37 (FLQPLAFTLLAIFLVLLYTWY) threads the bilayer. Residues Asn185, Asn275, and Asn356 are each glycosylated (N-linked (GlcNAc...) asparagine). Cys460 is a heme binding site.

It belongs to the cytochrome P450 family. Heme is required as a cofactor. As to expression, expressed at similar levels in fruit kernel, seedlings, leaves, stems and buds.

It localises to the membrane. The chain is Cytochrome P450 736A117 from Prunus mume (Japanese apricot).